We begin with the raw amino-acid sequence, 433 residues long: DNA methyltransferase 1-associated protein 1 (433 aa).

Residues 1 to 204 (MSADVRDILD…EVVALLAKAK (204 aa)) form a required for nuclear localization region. The region spanning 148–197 (NNWSKVQTDHLFDLARRFDLRFIVMADRWNRQQHGTKTVEELKERYYEVV) is the Myb-like domain. Residues 186–281 (VEELKERYYE…ADQQNEHASN (96 aa)) adopt a coiled-coil conformation. The span at 252 to 264 (EARKKERERKTQD) shows a compositional bias: basic and acidic residues. Residues 252-305 (EARKKERERKTQDLQKLISQADQQNEHASNTPSTRKYEKKLHKKKVHQQPRPSR) form a disordered region. Residues 268–285 (LISQADQQNEHASNTPST) are compositionally biased toward polar residues. Positions 288–299 (YEKKLHKKKVHQ) are enriched in basic residues.

Interacts with Rel. Interacts with akirin and Bap55.

The protein resides in the nucleus. Its subcellular location is the cytoplasm. Its function is as follows. Involved in transcription repression and activation. Required for larvae and pupal development, and for normal innate immune responses. Involved in modulating the activation of the immune deficiency pathway (Imd), acting either downstream of, or at the level of, the NF-kappa-B factor Rel. Possibly functions with akirin to regulate Rel, and its interaction with the Brahma complex protein Bap55 suggests that it may regulate the IMD pathway at the level of chromatin remodeling. This chain is DNA methyltransferase 1-associated protein 1, found in Drosophila melanogaster (Fruit fly).